The following is a 367-amino-acid chain: Aminomethyltransferase (367 aa).

The protein belongs to the GcvT family. As to quaternary structure, the glycine cleavage system is composed of four proteins: P, T, L and H.

It carries out the reaction N(6)-[(R)-S(8)-aminomethyldihydrolipoyl]-L-lysyl-[protein] + (6S)-5,6,7,8-tetrahydrofolate = N(6)-[(R)-dihydrolipoyl]-L-lysyl-[protein] + (6R)-5,10-methylene-5,6,7,8-tetrahydrofolate + NH4(+). In terms of biological role, the glycine cleavage system catalyzes the degradation of glycine. In Parasynechococcus marenigrum (strain WH8102), this protein is Aminomethyltransferase.